A 283-amino-acid polypeptide reads, in one-letter code: Acetyl-coenzyme A carboxylase carboxyl transferase subunit beta (283 aa).

A CoA carboxyltransferase N-terminal domain is found at 29–283 (LWISCPKCQQ…VKIHSMKGAF (255 aa)). Zn(2+) is bound by residues cysteine 33, cysteine 36, cysteine 51, and cysteine 54. The C4-type zinc finger occupies 33–54 (CPKCQQSIYHKDLGKYKTCPNC).

It belongs to the AccD/PCCB family. As to quaternary structure, acetyl-CoA carboxylase is a heterohexamer composed of biotin carboxyl carrier protein (AccB), biotin carboxylase (AccC) and two subunits each of ACCase subunit alpha (AccA) and ACCase subunit beta (AccD). The cofactor is Zn(2+).

It localises to the cytoplasm. The enzyme catalyses N(6)-carboxybiotinyl-L-lysyl-[protein] + acetyl-CoA = N(6)-biotinyl-L-lysyl-[protein] + malonyl-CoA. It participates in lipid metabolism; malonyl-CoA biosynthesis; malonyl-CoA from acetyl-CoA: step 1/1. Functionally, component of the acetyl coenzyme A carboxylase (ACC) complex. Biotin carboxylase (BC) catalyzes the carboxylation of biotin on its carrier protein (BCCP) and then the CO(2) group is transferred by the transcarboxylase to acetyl-CoA to form malonyl-CoA. In Ligilactobacillus salivarius (strain UCC118) (Lactobacillus salivarius), this protein is Acetyl-coenzyme A carboxylase carboxyl transferase subunit beta.